The primary structure comprises 460 residues: MALWGGRFSLAADRRFKQFNDSLRFDYRLAEQDIIGSVAWSRALVTVGVLTVQEQQQLVQALTALLEEVRTDPRSILDSDAEDIHSWVEQQLIGRVGDLGKKLHTGRSRNDQVATDLKLWCKDQGEMLRQALIALQQVLTACARQNQDAVMPGYTHLQRAQPITFAHWCMAYVEMLARDESRLDDALRRLNTSPLGSGALAGTAYPIDRDRLADWLGFSAATRNSLDSVSDRDHVLELLSAAAIGMVHLSRFAEDLIFFNSGEAGFIELSERVTSGSSLMPQKKNPDALELIRGKCGRVQGALSGMLMTLKGLPLAYNKDMQEDKEGLFDALDTWLDCLQMATLALDGLAVKRPRCAEAAQQGYANATELADYLVAKGIPFREAHHIVGEAVVAALAQGKPLEALPLEMLQSFSPVIGADIYPLLALDSCLVKRSARGGVAPQQVAQAIDDAQRRLGNIL.

It belongs to the lyase 1 family. Argininosuccinate lyase subfamily.

It is found in the cytoplasm. The enzyme catalyses 2-(N(omega)-L-arginino)succinate = fumarate + L-arginine. It functions in the pathway amino-acid biosynthesis; L-arginine biosynthesis; L-arginine from L-ornithine and carbamoyl phosphate: step 3/3. This is Argininosuccinate lyase from Edwardsiella ictaluri (strain 93-146).